A 99-amino-acid polypeptide reads, in one-letter code: PE family immunomodulator PE35 (99 aa).

The region spanning 1–90 (MEKMSHDPIA…DVARTYSQID (90 aa)) is the PE domain.

This sequence belongs to the mycobacterial PE family. In terms of assembly, interacts with PPE68. PE35/PPE68 complex interacts with human TLR2.

Its subcellular location is the secreted. The protein resides in the cell surface. In terms of biological role, plays a major role in RD1-associated pathogenesis, and may contribute to the establishment and maintenance of M.tuberculosis infection. Together with PPE68, stimulates the secretion of IL-10 and MCP-1 from human macrophages, via the interaction with human Toll-like receptor 2 (TLR2). In Mycobacterium tuberculosis (strain ATCC 25618 / H37Rv), this protein is PE family immunomodulator PE35 (PE35).